The sequence spans 230 residues: Dickkopf-like protein 1 (230 aa).

A signal peptide spans 1-20 (MCRLRVLLLLLPLAFVSSSA). Residues asparagine 31, asparagine 87, and asparagine 102 are each glycosylated (N-linked (GlcNAc...) asparagine).

As to quaternary structure, interacts with SLXL1; Co-localize in seminiferous tubules. Interacts with SLY. Post-translationally, N-glycosylated during spermatogenesis. Not N-glycosylated in mature sperm. As to expression, testis-specific. Abundant in the seminiferous tubules where it is associated with developing spermatocytes. Expressed only in testis (at protein level). Not detectable on postnatal days 4 and 9 but after day 18 it gradually increased as the development of testes progressed. Expressed at high levels in testis and at weak levels in epididymis.

The protein localises to the secreted. It localises to the cytoplasmic vesicle. The protein resides in the secretory vesicle. It is found in the acrosome. Involved in fertilization by facilitating sperm penetration of the zona pellucida. May promote spermatocyte apoptosis, thereby limiting sperm production. In adults, may reduce testosterone synthesis in Leydig cells. Is not essential either for development or fertility. The sequence is that of Dickkopf-like protein 1 from Mus musculus (Mouse).